A 366-amino-acid polypeptide reads, in one-letter code: uncharacterized protein (366 aa).

This is an uncharacterized protein from Amazona oratrix (yellow-headed parrot).